The primary structure comprises 672 residues: MSKEERPGREEILECQVMWEPDSKKNTQMDRFRAAVGAACGLALENYDDLYRWSVESYSDFWAEFWKFSGIVFSRAYDEVVDTSKGIADVPEWFKGSRLNYAENLLRHKENDRVALYVAREGKEEIVKVTFEELRQEVALFAAAMRKMGVKKGDRVVGYLPNSEHAVEAMLAAASIGAIWSSTSPDFGVNGVLDRFSQIQPKLIFSVEAVVYNGKEHSHMEKLQQVVKGLPDLKKVVVIPYVSSREKIDLSKIPNSVFLDDFLATGTSEQAPQLEFEQLPFSHPLFIMFSSGTTGAPKCMVHSAGGTLIQHLKEHLLHGNMTSSDILLCYTTAGWMMWNWMVSILATGAAMVLYDGSPLVPTPNVLWDLVDRIGITVLVTGAKWLSVLEEKAMKPVETHSLQMLHTILSTGSPLKAQSYEYVYRCIKSSILLGSISGGTDIISCFMGHNFSLPVYKGEIQARNLGMAVEAWNEEGKAVWGESGELVCTKPIPCQPTHFWNDENGSKYRKAYFSKFPGIWAHGDYCRINPKTGGIIMLGRSDGTLNPNGVRFGSSEIYNIVESFEEVEDSLCVPQYNKFREERVILFLKMASGHAFQPDLVKRIRDAIRVGLSARHVPSLILETKGIPYTLNGKKVEVAVKQIIAGKAVEQGGAFSNPETLDLYRDIPELQGF.

Belongs to the ATP-dependent AMP-binding enzyme family.

Its subcellular location is the cytoplasm. It localises to the cytosol. The enzyme catalyses acetoacetate + ATP + CoA = acetoacetyl-CoA + AMP + diphosphate. Converts acetoacetate to acetoacetyl-CoA in the cytosol. Ketone body-utilizing enzyme, responsible for the synthesis of cholesterol and fatty acids. This chain is Acetoacetyl-CoA synthetase (AACS), found in Macaca fascicularis (Crab-eating macaque).